A 139-amino-acid polypeptide reads, in one-letter code: Ribonuclease P/MRP protein subunit POP5 (139 aa).

It belongs to the eukaryotic/archaeal RNase P protein component 2 family.

The protein resides in the nucleus. The catalysed reaction is Endonucleolytic cleavage of RNA, removing 5'-extranucleotides from tRNA precursor.. Functionally, component of ribonuclease P, a protein complex that generates mature tRNA molecules by cleaving their 5'-ends. Also a component of RNase MRP, which cleaves pre-rRNA sequences. This Schizosaccharomyces pombe (strain 972 / ATCC 24843) (Fission yeast) protein is Ribonuclease P/MRP protein subunit POP5.